Here is a 142-residue protein sequence, read N- to C-terminus: Hemoglobin A subunit alpha-2 (142 aa).

One can recognise a Globin domain in the interval valine 2–arginine 142. Histidine 59 contributes to the O2 binding site. Histidine 88 lines the heme b pocket.

The protein belongs to the globin family. As to quaternary structure, tetramer of alpha-1, alpha-2 and two identical beta chains. In terms of tissue distribution, red blood cells.

Its function is as follows. Involved in oxygen transport from the lung to the various peripheral tissues. The polypeptide is Hemoglobin A subunit alpha-2 (Aldabrachelys gigantea (Aldabra giant tortoise)).